Here is a 315-residue protein sequence, read N- to C-terminus: Neuroguidin (315 aa).

2 disordered regions span residues 127–201 (SEND…KQKR) and 289–315 (VQDI…RKRK). Basic and acidic residues-rich tracts occupy residues 159 to 168 (KTKEQKEPSG) and 182 to 200 (YDGD…EKQK). A coiled-coil region spans residues 181-206 (HYDGDLTEADRQKERVEKQKRAALRS). Residues 296 to 315 (KPKKKKIIKKGKKKVFRKRK) are compositionally biased toward basic residues.

It belongs to the SAS10 family. As to quaternary structure, part of the small subunit (SSU) processome, composed of more than 70 proteins and the RNA chaperone small nucleolar RNA (snoRNA) U3.

The protein resides in the nucleus. It is found in the nucleolus. Its subcellular location is the chromosome. The protein localises to the centromere. It localises to the cytoplasm. The protein resides in the cell projection. It is found in the axon. Its subcellular location is the dendrite. The protein localises to the filopodium. Its function is as follows. Part of the small subunit (SSU) processome, first precursor of the small eukaryotic ribosomal subunit. During the assembly of the SSU processome in the nucleolus, many ribosome biogenesis factors, an RNA chaperone and ribosomal proteins associate with the nascent pre-rRNA and work in concert to generate RNA folding, modifications, rearrangements and cleavage as well as targeted degradation of pre-ribosomal RNA by the RNA exosome. Its dissociation from the complex determines the transition from state pre-A1 to state pre-A1*. May inhibit mRNA translation. The sequence is that of Neuroguidin (ngdn) from Danio rerio (Zebrafish).